The chain runs to 213 residues: tRNA (guanine-N(7)-)-methyltransferase (213 aa).

S-adenosyl-L-methionine is bound by residues glutamate 44, glutamate 69, aspartate 96, and aspartate 118. The active site involves aspartate 118. Residues lysine 122, aspartate 154, and 192–195 (TEYE) each bind substrate.

Belongs to the class I-like SAM-binding methyltransferase superfamily. TrmB family.

The enzyme catalyses guanosine(46) in tRNA + S-adenosyl-L-methionine = N(7)-methylguanosine(46) in tRNA + S-adenosyl-L-homocysteine. It participates in tRNA modification; N(7)-methylguanine-tRNA biosynthesis. Catalyzes the formation of N(7)-methylguanine at position 46 (m7G46) in tRNA. The protein is tRNA (guanine-N(7)-)-methyltransferase of Limosilactobacillus reuteri (strain DSM 20016) (Lactobacillus reuteri).